The following is a 269-amino-acid chain: Phosphonoacetaldehyde hydrolase (269 aa).

Aspartate 9 serves as the catalytic Nucleophile. Positions 9 and 11 each coordinate Mg(2+). Catalysis depends on lysine 50, which acts as the Schiff-base intermediate with substrate. Aspartate 184 is a binding site for Mg(2+).

Belongs to the HAD-like hydrolase superfamily. PhnX family. In terms of assembly, homodimer. Mg(2+) serves as cofactor.

The catalysed reaction is phosphonoacetaldehyde + H2O = acetaldehyde + phosphate + H(+). Functionally, involved in phosphonate degradation. This chain is Phosphonoacetaldehyde hydrolase, found in Lysinibacillus sphaericus (strain C3-41).